Consider the following 401-residue polypeptide: Glucose-6-phosphate isomerase (401 aa).

Catalysis depends on Glu261, which acts as the Proton donor. Active-site residues include His282 and Lys392.

Belongs to the GPI family. As to quaternary structure, homodimer.

The protein localises to the cytoplasm. It carries out the reaction alpha-D-glucose 6-phosphate = beta-D-fructose 6-phosphate. It functions in the pathway carbohydrate biosynthesis; gluconeogenesis. It participates in carbohydrate degradation; glycolysis; D-glyceraldehyde 3-phosphate and glycerone phosphate from D-glucose: step 2/4. With respect to regulation, competively inhibited by 6-phosphogluconate and erythrose 4-phosphate. In terms of biological role, catalyzes the isomerization of glucose-6-P to fructose-6-P. The sequence is that of Glucose-6-phosphate isomerase from Methanocaldococcus jannaschii (strain ATCC 43067 / DSM 2661 / JAL-1 / JCM 10045 / NBRC 100440) (Methanococcus jannaschii).